We begin with the raw amino-acid sequence, 145 residues long: Peptide methionine sulfoxide reductase MsrB (145 aa).

The 124-residue stretch at 6–129 (KNERLKQLTD…NSAALRFIPV (124 aa)) folds into the MsrB domain. The Nucleophile role is filled by cysteine 118.

The protein belongs to the MsrB Met sulfoxide reductase family.

The enzyme catalyses L-methionyl-[protein] + [thioredoxin]-disulfide + H2O = L-methionyl-(R)-S-oxide-[protein] + [thioredoxin]-dithiol. In Listeria welshimeri serovar 6b (strain ATCC 35897 / DSM 20650 / CCUG 15529 / CIP 8149 / NCTC 11857 / SLCC 5334 / V8), this protein is Peptide methionine sulfoxide reductase MsrB.